The chain runs to 102 residues: Small ribosomal subunit protein uS10 (102 aa).

The protein belongs to the universal ribosomal protein uS10 family. In terms of assembly, part of the 30S ribosomal subunit.

Involved in the binding of tRNA to the ribosomes. In Thermococcus kodakarensis (strain ATCC BAA-918 / JCM 12380 / KOD1) (Pyrococcus kodakaraensis (strain KOD1)), this protein is Small ribosomal subunit protein uS10.